Consider the following 423-residue polypeptide: Glutamyl-tRNA reductase (423 aa).

Residues 51 to 54 (TCNR), S99, 104 to 106 (EDQ), and Q110 each bind substrate. The active-site Nucleophile is the C52. 179–184 (GSGEMG) provides a ligand contact to NADP(+).

The protein belongs to the glutamyl-tRNA reductase family. As to quaternary structure, homodimer.

The catalysed reaction is (S)-4-amino-5-oxopentanoate + tRNA(Glu) + NADP(+) = L-glutamyl-tRNA(Glu) + NADPH + H(+). The protein operates within porphyrin-containing compound metabolism; protoporphyrin-IX biosynthesis; 5-aminolevulinate from L-glutamyl-tRNA(Glu): step 1/2. Its function is as follows. Catalyzes the NADPH-dependent reduction of glutamyl-tRNA(Glu) to glutamate 1-semialdehyde (GSA). This Methanoculleus marisnigri (strain ATCC 35101 / DSM 1498 / JR1) protein is Glutamyl-tRNA reductase.